Reading from the N-terminus, the 545-residue chain is Esterase-5B (545 aa).

Positions Met1–Ala19 are cleaved as a signal peptide. A disulfide bridge links Cys84 with Cys103. N-linked (GlcNAc...) asparagine glycosylation is present at Asn113. Ser207 serves as the catalytic Acyl-ester intermediate. Cys259 and Cys271 form a disulfide bridge. The N-linked (GlcNAc...) asparagine glycan is linked to Asn421. The active-site Charge relay system is the His467. Asn507 carries an N-linked (GlcNAc...) asparagine glycan. A disulfide bond links Cys515 and Cys536.

The protein belongs to the type-B carboxylesterase/lipase family. As to quaternary structure, homodimer.

The protein resides in the secreted. The catalysed reaction is a carboxylic ester + H2O = an alcohol + a carboxylate + H(+). The sequence is that of Esterase-5B (Est-5B) from Drosophila persimilis (Fruit fly).